A 123-amino-acid chain; its full sequence is Large ribosomal subunit protein uL14c (123 aa).

This sequence belongs to the universal ribosomal protein uL14 family. In terms of assembly, part of the 50S ribosomal subunit.

The protein resides in the plastid. Its subcellular location is the chloroplast. Functionally, binds to 23S rRNA. The polypeptide is Large ribosomal subunit protein uL14c (Oryza nivara (Indian wild rice)).